We begin with the raw amino-acid sequence, 163 residues long: SKP1-like protein 3 (163 aa).

Residues 105–163 form an interaction with the F-box domain of F-box proteins region; that stretch reads LRAANYLNISGLLDLTCKAVADQMRGKTPAQMREHFNIKNDYTPEEEAEVRNENRWAFE.

It belongs to the SKP1 family. As to quaternary structure, part of a SCF (SKP1-cullin-F-box) protein ligase complex. Interacts with ADO3/FKF1 and At3g61590. In terms of tissue distribution, highly expressed in siliques.

The protein resides in the nucleus. The protein operates within protein modification; protein ubiquitination. Functionally, involved in ubiquitination and subsequent proteasomal degradation of target proteins. Together with CUL1, RBX1 and a F-box protein, it forms a SCF E3 ubiquitin ligase complex. The functional specificity of this complex depends on the type of F-box protein. In the SCF complex, it serves as an adapter that links the F-box protein to CUL1. The chain is SKP1-like protein 3 (ASK3) from Arabidopsis thaliana (Mouse-ear cress).